A 176-amino-acid chain; its full sequence is Cytochrome b (176 aa).

3 helical membrane-spanning segments follow: residues 33–53 (FGSLLGICLMLQIMTGLFLAM), 77–98 (WMLRYLHANGASMFFICLYLHV), and 113–133 (WNVGVLLLFTVMATAFMGYVL). Positions 83 and 97 each coordinate heme b.

It belongs to the cytochrome b family. The cytochrome bc1 complex contains 11 subunits: 3 respiratory subunits (MT-CYB, CYC1 and UQCRFS1), 2 core proteins (UQCRC1 and UQCRC2) and 6 low-molecular weight proteins (UQCRH/QCR6, UQCRB/QCR7, UQCRQ/QCR8, UQCR10/QCR9, UQCR11/QCR10 and a cleavage product of UQCRFS1). This cytochrome bc1 complex then forms a dimer. Requires heme b as cofactor.

It is found in the mitochondrion inner membrane. Component of the ubiquinol-cytochrome c reductase complex (complex III or cytochrome b-c1 complex) that is part of the mitochondrial respiratory chain. The b-c1 complex mediates electron transfer from ubiquinol to cytochrome c. Contributes to the generation of a proton gradient across the mitochondrial membrane that is then used for ATP synthesis. In Idionycteris phyllotis (Allen's big-eared bat), this protein is Cytochrome b (MT-CYB).